A 402-amino-acid polypeptide reads, in one-letter code: Phytoene synthase 2, chloroplastic (402 aa).

The transit peptide at 1–54 (MAAGSSAVWAAQHPACSGGKFHHLSPSHSHCRPRRALQTPPALPARRSGASPPR) directs the protein to the chloroplast. Residues 20 to 35 (KFHHLSPSHSHCRPRR) are compositionally biased toward basic residues. The segment at 20-54 (KFHHLSPSHSHCRPRRALQTPPALPARRSGASPPR) is disordered. The span at 44–54 (PARRSGASPPR) shows a compositional bias: low complexity.

Belongs to the phytoene/squalene synthase family. In terms of tissue distribution, expressed in leaves and endosperm.

The protein resides in the plastid. It localises to the chloroplast. The protein localises to the plastoglobule. The catalysed reaction is 2 (2E,6E,10E)-geranylgeranyl diphosphate = 15-cis-phytoene + 2 diphosphate. Catalyzes the conversion of geranylgeranyl diphosphate to phytoene. Mediates the first committed step in carotenoid biosynthesis. This chain is Phytoene synthase 2, chloroplastic, found in Zea mays (Maize).